The sequence spans 372 residues: Protein phosphatase Mn(2+)-dependent 1K (372 aa).

The N-terminal 29 residues, 1 to 29 (MSTAALLTLVRSGGNQVRRRVLLRARGLQ), are a transit peptide targeting the mitochondrion. Residues 46-61 (KWSRFDPDGSGRPATW) are critical for association with the BCKDH complex. The region spanning 94–346 (NVGSASQIGK…DNTTAVVVPF (253 aa)) is the PPM-type phosphatase domain. Asp127 and Gly128 together coordinate Mn(2+). At Ser248 the chain carries Phosphoserine. Mn(2+) contacts are provided by Asp298 and Asp337.

The protein belongs to the PP2C family. Monomer. Interacts with E1 and E2 components of the branched-chain alpha-ketoacid dehydrogenase (BCKDH) complex; this interaction requires colocalization in mitochondria. Interacts with BCKDHA but not with BCKDHB of the E1 component. Interacts with the 24-meric E2 core composed of DBT monomers with a 24:1 stoichiometry; the N-terminal region (residues 49-61) of PPM1K and C-terminal linker of the lipoyl domain of DBT (residues 145-160) are critical for this interaction, whereas the lipoyl prosthetic group is dispensable. Competes with BCKDK for binding to the E2 core; this interaction is modulated by branched-chain alpha-keto acids. At steady state, BCKDH holoenzyme preferentially binds BCKDK and BCKDHA is phosphorylated. In response to high levels of branched-chain alpha-keto acids, the inhibitory BCKDK is replaced by activating PPM1K leading to BCKDHA dephosphorylation and BCAA degradation. Mn(2+) serves as cofactor.

It localises to the mitochondrion matrix. It carries out the reaction O-phospho-L-seryl-[3-methyl-2-oxobutanoate dehydrogenase] + H2O = L-seryl-[3-methyl-2-oxobutanoate dehydrogenase] + phosphate. The enzyme catalyses O-phospho-L-seryl-[protein] + H2O = L-seryl-[protein] + phosphate. Its pathway is protein modification. In terms of biological role, serine/threonine-protein phosphatase component of macronutrients metabolism. Forms a functional kinase and phosphatase pair with BCKDK, serving as a metabolic regulatory node that coordinates branched-chain amino acids (BCAAs) with glucose and lipid metabolism via two distinct phosphoprotein targets: mitochondrial BCKDHA subunit of the branched-chain alpha-ketoacid dehydrogenase (BCKDH) complex and cytosolic ACLY, a lipogenic enzyme of Krebs cycle. At high levels of branched-chain ketoacids, dephosphorylates and activates mitochondrial BCKDH complex, a multisubunit complex consisting of three multimeric components each involved in different steps of BCAA catabolism: E1 composed of BCKDHA and BCKDHB, E2 core composed of DBT monomers, and E3 composed of DLD monomers. Tightly associates with the E2 component of BCKDH complex and dephosphorylates BCKDHA on Ser-347. Regulates the reversible phosphorylation of ACLY in response to changes in cellular carbohydrate abundance such as occurs during fasting to feeding metabolic transition. At fasting state, appears to dephosphorylate ACLY on Ser-455 and inactivate it. Refeeding stimulates MLXIPL/ChREBP transcription factor, leading to increased BCKDK to PPM1K expression ratio, phosphorylation and activation of ACLY that ultimately results in the generation of malonyl-CoA and oxaloacetate immediate substrates of de novo lipogenesis and gluconeogenesis, respectively. Recognizes phosphosites having SxS or RxxS motifs and strictly depends on Mn(2+) ions for the phosphatase activity. Regulates Ca(2+)-induced opening of mitochondrial transition pore and apoptotic cell death. This is Protein phosphatase Mn(2+)-dependent 1K (PPM1K) from Bos taurus (Bovine).